The following is a 335-amino-acid chain: Ketol-acid reductoisomerase (NADP(+)) (335 aa).

The KARI N-terminal Rossmann domain maps to Ala2 to Thr182. NADP(+) is bound by residues Tyr25 to Gln28, Arg48, Ser51, Ser53, and Asp83 to Gln86. The active site involves His108. Residue Gly134 coordinates NADP(+). The KARI C-terminal knotted domain occupies Thr183 to Leu328. Mg(2+) contacts are provided by Asp191, Glu195, Glu227, and Glu231. Ser252 contacts substrate.

This sequence belongs to the ketol-acid reductoisomerase family. Mg(2+) is required as a cofactor.

It catalyses the reaction (2R)-2,3-dihydroxy-3-methylbutanoate + NADP(+) = (2S)-2-acetolactate + NADPH + H(+). The enzyme catalyses (2R,3R)-2,3-dihydroxy-3-methylpentanoate + NADP(+) = (S)-2-ethyl-2-hydroxy-3-oxobutanoate + NADPH + H(+). It participates in amino-acid biosynthesis; L-isoleucine biosynthesis; L-isoleucine from 2-oxobutanoate: step 2/4. It functions in the pathway amino-acid biosynthesis; L-valine biosynthesis; L-valine from pyruvate: step 2/4. Its function is as follows. Involved in the biosynthesis of branched-chain amino acids (BCAA). Catalyzes an alkyl-migration followed by a ketol-acid reduction of (S)-2-acetolactate (S2AL) to yield (R)-2,3-dihydroxy-isovalerate. In the isomerase reaction, S2AL is rearranged via a Mg-dependent methyl migration to produce 3-hydroxy-3-methyl-2-ketobutyrate (HMKB). In the reductase reaction, this 2-ketoacid undergoes a metal-dependent reduction by NADPH to yield (R)-2,3-dihydroxy-isovalerate. The polypeptide is Ketol-acid reductoisomerase (NADP(+)) (Methanosarcina barkeri (strain Fusaro / DSM 804)).